Reading from the N-terminus, the 876-residue chain is Valine--tRNA ligase (876 aa).

The 'HIGH' region motif lies at 44–54; the sequence is PNVTGKLHLGH. Positions 520–524 match the 'KMSKS' region motif; the sequence is KMSKS. Lys-523 is a binding site for ATP. Positions 805–876 form a coiled coil; it reads LEGLIDMDKE…VKARIEQLKA (72 aa).

It belongs to the class-I aminoacyl-tRNA synthetase family. ValS type 1 subfamily. Monomer.

It is found in the cytoplasm. It catalyses the reaction tRNA(Val) + L-valine + ATP = L-valyl-tRNA(Val) + AMP + diphosphate. Functionally, catalyzes the attachment of valine to tRNA(Val). As ValRS can inadvertently accommodate and process structurally similar amino acids such as threonine, to avoid such errors, it has a 'posttransfer' editing activity that hydrolyzes mischarged Thr-tRNA(Val) in a tRNA-dependent manner. The chain is Valine--tRNA ligase from Staphylococcus aureus (strain Mu3 / ATCC 700698).